Consider the following 219-residue polypeptide: PKHD-type hydroxylase SYNPCC7002_A2658 (219 aa).

A Fe2OG dioxygenase domain is found at 78–172 (TVHTLLFSRY…RLVAVGWVQS (95 aa)). Fe cation contacts are provided by histidine 96, aspartate 98, and histidine 153. A 2-oxoglutarate-binding site is contributed by arginine 163.

It depends on Fe(2+) as a cofactor. L-ascorbate serves as cofactor.

This Picosynechococcus sp. (strain ATCC 27264 / PCC 7002 / PR-6) (Agmenellum quadruplicatum) protein is PKHD-type hydroxylase SYNPCC7002_A2658.